The primary structure comprises 108 residues: Small ribosomal subunit protein uS17 (108 aa).

It belongs to the universal ribosomal protein uS17 family. In terms of assembly, part of the 30S ribosomal subunit.

One of the primary rRNA binding proteins, it binds specifically to the 5'-end of 16S ribosomal RNA. This chain is Small ribosomal subunit protein uS17, found in Methanospirillum hungatei JF-1 (strain ATCC 27890 / DSM 864 / NBRC 100397 / JF-1).